The following is a 136-amino-acid chain: Histone H3.3C (136 aa).

Residues 1-10 are compositionally biased toward polar residues; the sequence is MALTKQTARK. Residues 1 to 44 form a disordered region; the sequence is MALTKQTARKSTGGKAPRKQLATKATRKSAPSTGGVKKPHRYRP. Position 4 is a phosphothreonine; by HASPIN (T4). K5 is subject to Allysine; alternate. Position 5 is an N6,N6,N6-trimethyllysine; alternate (K5). At K5 the chain carries N6,N6-dimethyllysine; alternate. K5 is subject to N6-(2-hydroxyisobutyryl)lysine; alternate. K5 carries the N6-(beta-hydroxybutyryl)lysine; alternate modification. K5 is subject to N6-acetyllysine; alternate. N6-methyllysine; alternate is present on K5. Q6 carries the post-translational modification 5-glutamyl dopamine; alternate. Q6 is subject to 5-glutamyl serotonin; alternate. T7 carries the post-translational modification Phosphothreonine; by PKC. Citrulline; alternate is present on R9. The residue at position 9 (R9) is a Symmetric dimethylarginine; by PRMT5; alternate. K10 bears the N6,N6,N6-trimethyllysine; alternate mark. The residue at position 10 (K10) is an N6,N6-dimethyllysine; alternate. K10 bears the N6-(2-hydroxyisobutyryl)lysine; alternate mark. N6-(beta-hydroxybutyryl)lysine; alternate is present on K10. At K10 the chain carries N6-acetyllysine; alternate. K10 carries the N6-methyllysine; alternate modification. K10 bears the N6-lactoyllysine; alternate mark. S11 carries the ADP-ribosylserine; alternate modification. Position 11 is a phosphoserine; alternate; by AURKB, AURKC, RPS6KA3, RPS6KA4 and RPS6KA5 (S11). T12 carries the post-translational modification Phosphothreonine; by PKC. K15 is subject to N6-(2-hydroxyisobutyryl)lysine; alternate. Residue K15 is modified to N6-(beta-hydroxybutyryl)lysine; alternate. K15 bears the N6-acetyllysine; alternate mark. Residue K15 is modified to N6-lactoyllysine; alternate. An N6-glutaryllysine; alternate modification is found at K15. K15 carries the N6-succinyllysine; alternate modification. R18 carries the citrulline; alternate modification. R18 bears the Asymmetric dimethylarginine; by CARM1; alternate mark. K19 and K24 each carry N6-(2-hydroxyisobutyryl)lysine; alternate. Residues K19 and K24 each carry the N6-(beta-hydroxybutyryl)lysine; alternate modification. N6-acetyllysine; alternate occurs at positions 19 and 24. K19 and K24 each carry N6-methyllysine; alternate. Residues K19 and K24 each carry the N6-lactoyllysine; alternate modification. N6-glutaryllysine; alternate is present on residues K19 and K24. 2 positions are modified to N6-butyryllysine; alternate: K19 and K24. Residue R27 is modified to Citrulline. K28 is modified (N6,N6,N6-trimethyllysine; alternate). Residue K28 is modified to N6,N6-dimethyllysine; alternate. An N6-(2-hydroxyisobutyryl)lysine; alternate modification is found at K28. Residue K28 is modified to N6-acetyllysine; alternate. Residue K28 is modified to N6-methyllysine; alternate. N6-lactoyllysine; alternate is present on K28. K28 carries the post-translational modification N6-glutaryllysine; alternate. Position 29 is an ADP-ribosylserine; alternate (S29). Residue S29 is modified to Phosphoserine; alternate; by AURKB, AURKC and RPS6KA5. Phosphoserine is present on S32. At K37 the chain carries N6,N6,N6-trimethyllysine; alternate. K37 carries the post-translational modification N6,N6-dimethyllysine; alternate. K37 bears the N6-(2-hydroxyisobutyryl)lysine; alternate mark. An N6-acetyllysine; alternate modification is found at K37. K37 carries the N6-methyllysine; alternate modification. K38 is subject to N6-methyllysine. At Y42 the chain carries Phosphotyrosine. K57 carries the post-translational modification N6,N6,N6-trimethyllysine; alternate. Residue K57 is modified to N6-(2-hydroxyisobutyryl)lysine; alternate. The residue at position 57 (K57) is an N6-(beta-hydroxybutyryl)lysine; alternate. K57 carries the post-translational modification N6-acetyllysine; alternate. K57 is subject to N6-lactoyllysine; alternate. At K57 the chain carries N6-glutaryllysine; alternate. K57 carries the N6-succinyllysine; alternate modification. K57 bears the N6-methyllysine; by EHMT2; alternate mark. The residue at position 58 (S58) is a Phosphoserine. N6-(2-hydroxyisobutyryl)lysine; alternate is present on residues K65 and K80. An N6-methyllysine; alternate mark is found at K65 and K80. Position 80 is an N6,N6,N6-trimethyllysine; alternate (K80). K80 carries the N6,N6-dimethyllysine; alternate modification. Position 80 is an N6-acetyllysine; alternate (K80). K80 bears the N6-lactoyllysine; alternate mark. K80 bears the N6-glutaryllysine; alternate mark. K80 bears the N6-succinyllysine; alternate mark. The residue at position 81 (T81) is a Phosphothreonine. S87 is subject to Phosphoserine. T108 carries the phosphothreonine modification. K116 and K123 each carry N6-acetyllysine; alternate. N6-glutaryllysine; alternate occurs at positions 116 and 123. An N6-(2-hydroxyisobutyryl)lysine; alternate modification is found at K123. K123 is subject to N6-methyllysine; alternate. At K123 the chain carries N6-succinyllysine; alternate.

It belongs to the histone H3 family. As to quaternary structure, the nucleosome is a histone octamer containing two molecules each of H2A, H2B, H3 and H4 assembled in one H3-H4 heterotetramer and two H2A-H2B heterodimers. The octamer wraps approximately 147 bp of DNA. Acetylation is generally linked to gene activation. Acetylation on Lys-10 (H3K9ac) impairs methylation at Arg-9 (H3R8me2s). Acetylation on Lys-19 (H3K18ac) and Lys-24 (H3K24ac) favors methylation at Arg-18 (H3R17me). Acetylation at Lys-123 (H3K122ac) by EP300/p300 plays a central role in chromatin structure: localizes at the surface of the histone octamer and stimulates transcription, possibly by promoting nucleosome instability. In terms of processing, citrullination at Arg-9 (H3R8ci) and/or Arg-18 (H3R17ci) by PADI4 impairs methylation and represses transcription. Post-translationally, butyrylation of histones marks active promoters and competes with histone acetylation. It is present during late spermatogenesis. Asymmetric dimethylation at Arg-18 (H3R17me2a) by CARM1 is linked to gene activation. Symmetric dimethylation at Arg-9 (H3R8me2s) by PRMT5 is linked to gene repression. In terms of processing, methylation at Lys-5 (H3K4me), Lys-37 and Lys-80 are linked to gene activation. Methylation at Lys-5 (H3K4me) facilitates subsequent acetylation of H3 and H4. Methylation at Lys-80 is associated with DNA double-strand break (DSB) responses and is a specific target for TP53BP1. Methylation at Lys-10 (H3K9me) and Lys-28 (H3K27me) are linked to gene repression. Methylation at Lys-10 (H3K9me) is a specific target for HP1 proteins (CBX1, CBX3 and CBX5) and prevents subsequent phosphorylation at Ser-11 (H3S10ph) and acetylation of H3 and H4. Methylation at Lys-5 (H3K4me) and Lys-80 require preliminary monoubiquitination of H2B at 'Lys-120'. Methylation at Lys-10 (H3K9me) and Lys-28 (H3K27me) are enriched in inactive X chromosome chromatin. Monomethylation at Lys-57 (H3K56me1) by EHMT2/G9A in G1 phase promotes interaction with PCNA and is required for DNA replication. Post-translationally, phosphorylated at Thr-4 (H3T3ph) by HASPIN during prophase and dephosphorylated during anaphase. Phosphorylation at Ser-11 (H3S10ph) by AURKB is crucial for chromosome condensation and cell-cycle progression during mitosis and meiosis. In addition phosphorylation at Ser-11 (H3S10ph) by RPS6KA4 and RPS6KA5 is important during interphase because it enables the transcription of genes following external stimulation, like mitogens, stress, growth factors or UV irradiation and result in the activation of genes, such as c-fos and c-jun. Phosphorylation at Ser-11 (H3S10ph), which is linked to gene activation, prevents methylation at Lys-10 (H3K9me) but facilitates acetylation of H3 and H4. Phosphorylation at Ser-11 (H3S10ph) by AURKB mediates the dissociation of HP1 proteins (CBX1, CBX3 and CBX5) from heterochromatin. Phosphorylation at Ser-11 (H3S10ph) is also an essential regulatory mechanism for neoplastic cell transformation. Phosphorylated at Ser-29 (H3S28ph) by MAP3K20 isoform 1, RPS6KA5 or AURKB during mitosis or upon ultraviolet B irradiation. Phosphorylation at Thr-7 (H3T6ph) by PRKCB is a specific tag for epigenetic transcriptional activation that prevents demethylation of Lys-5 (H3K4me) by LSD1/KDM1A. At centromeres, specifically phosphorylated at Thr-12 (H3T11ph) from prophase to early anaphase, by DAPK3 and PKN1. Phosphorylation at Thr-12 (H3T11ph) by PKN1 or isoform M2 of PKM (PKM2) is a specific tag for epigenetic transcriptional activation that promotes demethylation of Lys-10 (H3K9me) by KDM4C/JMJD2C. Phosphorylation at Tyr-42 (H3Y41ph) by JAK2 promotes exclusion of CBX5 (HP1 alpha) from chromatin. Lysine deamination at Lys-5 (H3K4all) to form allysine is mediated by LOXL2. Allysine formation by LOXL2 only takes place on H3K4me3 and results in gene repression. In terms of processing, succinylation at Lys-80 (H3K79succ) by KAT2A takes place with a maximum frequency around the transcription start sites of genes. It gives a specific tag for epigenetic transcription activation. Desuccinylation at Lys-123 (H3K122succ) by SIRT7 in response to DNA damage promotes chromatin condensation and double-strand breaks (DSBs) repair. Post-translationally, serine ADP-ribosylation constitutes the primary form of ADP-ribosylation of proteins in response to DNA damage. Serine ADP-ribosylation at Ser-11 (H3S10ADPr) is mutually exclusive with phosphorylation at Ser-11 (H3S10ph) and impairs acetylation at Lys-10 (H3K9ac).

It is found in the nucleus. The protein localises to the chromosome. Its function is as follows. Core component of nucleosome. Nucleosomes wrap and compact DNA into chromatin, limiting DNA accessibility to the cellular machineries which require DNA as a template. Histones thereby play a central role in transcription regulation, DNA repair, DNA replication and chromosomal stability. DNA accessibility is regulated via a complex set of post-translational modifications of histones, also called histone code, and nucleosome remodeling. In Mus musculus (Mouse), this protein is Histone H3.3C.